Reading from the N-terminus, the 180-residue chain is Adenine phosphoribosyltransferase (180 aa).

This sequence belongs to the purine/pyrimidine phosphoribosyltransferase family. Homodimer.

It localises to the cytoplasm. The catalysed reaction is AMP + diphosphate = 5-phospho-alpha-D-ribose 1-diphosphate + adenine. The protein operates within purine metabolism; AMP biosynthesis via salvage pathway; AMP from adenine: step 1/1. Catalyzes a salvage reaction resulting in the formation of AMP, that is energically less costly than de novo synthesis. The polypeptide is Adenine phosphoribosyltransferase (Butyrivibrio fibrisolvens).